Reading from the N-terminus, the 544-residue chain is Chromosomal replication initiator protein DnaA (544 aa).

The interval 1-71 is domain I, interacts with DnaA modulators; it reads MNDFWQHCSA…ADMARDFWHT (71 aa). Residues 71-207 are domain II; that stretch reads TPIDVQFVLD…GETDSMYERS (137 aa). The span at 90 to 105 shows a compositional bias: low complexity; that stretch reads AAAPAPASARPASAPG. Disordered stretches follow at residues 90-111 and 180-203; these read AAAP…GGSA and AAAR…TDSM. Positions 191 to 200 are enriched in polar residues; sequence SAGSNGNGET. The segment at 208 to 424 is domain III, AAA+ region; sequence KLNPVLTFDN…GALRKILAYS (217 aa). The ATP site is built by glycine 252, glycine 254, lysine 255, and threonine 256. The tract at residues 425–544 is domain IV, binds dsDNA; that stretch reads KFHGREITIE…LHVLEQTLKG (120 aa).

It belongs to the DnaA family. In terms of assembly, oligomerizes as a right-handed, spiral filament on DNA at oriC.

The protein resides in the cytoplasm. Plays an essential role in the initiation and regulation of chromosomal replication. ATP-DnaA binds to the origin of replication (oriC) to initiate formation of the DNA replication initiation complex once per cell cycle. Binds the DnaA box (a 9 base pair repeat at the origin) and separates the double-stranded (ds)DNA. Forms a right-handed helical filament on oriC DNA; dsDNA binds to the exterior of the filament while single-stranded (ss)DNA is stabiized in the filament's interior. The ATP-DnaA-oriC complex binds and stabilizes one strand of the AT-rich DNA unwinding element (DUE), permitting loading of DNA polymerase. After initiation quickly degrades to an ADP-DnaA complex that is not apt for DNA replication. Binds acidic phospholipids. This Paraburkholderia xenovorans (strain LB400) protein is Chromosomal replication initiator protein DnaA.